The following is a 254-amino-acid chain: Large ribosomal subunit protein uL2 (254 aa).

The protein belongs to the universal ribosomal protein uL2 family. Component of the large ribosomal subunit. Mature ribosomes consist of a small (40S) and a large (60S) subunit. The 40S subunit contains about 32 different proteins and 1 molecule of RNA (18S). The 60S subunit contains 45 different proteins and 3 molecules of RNA (25S, 5.8S and 5S).

Its subcellular location is the cytoplasm. Its function is as follows. Component of the ribosome, a large ribonucleoprotein complex responsible for the synthesis of proteins in the cell. The small ribosomal subunit (SSU) binds messenger RNAs (mRNAs) and translates the encoded message by selecting cognate aminoacyl-transfer RNA (tRNA) molecules. The large subunit (LSU) contains the ribosomal catalytic site termed the peptidyl transferase center (PTC), which catalyzes the formation of peptide bonds, thereby polymerizing the amino acids delivered by tRNAs into a polypeptide chain. The nascent polypeptides leave the ribosome through a tunnel in the LSU and interact with protein factors that function in enzymatic processing, targeting, and the membrane insertion of nascent chains at the exit of the ribosomal tunnel. This Candida albicans (strain SC5314 / ATCC MYA-2876) (Yeast) protein is Large ribosomal subunit protein uL2.